Reading from the N-terminus, the 621-residue chain is Protein CASP (621 aa).

Residues 1-574 (MEIVSRAWES…ILATPKSRTV (574 aa)) lie on the Cytoplasmic side of the membrane. Coiled-coil stretches lie at residues 101–445 (LLKG…VQDI) and 473–525 (ILTS…FLQS). Residues 575–595 (FFSYLLILHALIMLVLYKFAF) traverse the membrane as a helical; Anchor for type IV membrane protein segment. The Lumenal portion of the chain corresponds to 596–621 (DQSVVRDAETECEYKFHQHMLDNHKQ).

Belongs to the CASP family.

It is found in the golgi apparatus membrane. Its function is as follows. May be involved in intra-Golgi retrograde transport. This Caenorhabditis elegans protein is Protein CASP (ceh-44).